A 172-amino-acid chain; its full sequence is Acidic proline-rich protein PRP25 (172 aa).

Residues 1–16 form the signal peptide; sequence MLVVLFTAVLLTLSYA. Positions 22 to 172 are disordered; it reads ELQILDQTPN…QQGPPPPGGP (151 aa). Over residues 32–44 the composition is skewed to pro residues; the sequence is QKPPPPGFPPRPP. A compositionally biased stretch (low complexity) spans 57-67; that stretch reads GPQQSPLQPGK. Pro residues-rich tracts occupy residues 68-137 and 145-172; these read PQDP…PQQK and QGPPPPGGPQQKPPQPGNQQGPPPPGGP.

The protein localises to the secreted. The protein is Acidic proline-rich protein PRP25 of Rattus norvegicus (Rat).